A 317-amino-acid polypeptide reads, in one-letter code: Acetyl-coenzyme A carboxylase carboxyl transferase subunit alpha (317 aa).

The CoA carboxyltransferase C-terminal domain occupies 33-294; the sequence is NINKEINCLR…KNRILKDLKE (262 aa).

It belongs to the AccA family. As to quaternary structure, acetyl-CoA carboxylase is a heterohexamer composed of biotin carboxyl carrier protein (AccB), biotin carboxylase (AccC) and two subunits each of ACCase subunit alpha (AccA) and ACCase subunit beta (AccD).

Its subcellular location is the cytoplasm. The catalysed reaction is N(6)-carboxybiotinyl-L-lysyl-[protein] + acetyl-CoA = N(6)-biotinyl-L-lysyl-[protein] + malonyl-CoA. It participates in lipid metabolism; malonyl-CoA biosynthesis; malonyl-CoA from acetyl-CoA: step 1/1. Its function is as follows. Component of the acetyl coenzyme A carboxylase (ACC) complex. First, biotin carboxylase catalyzes the carboxylation of biotin on its carrier protein (BCCP) and then the CO(2) group is transferred by the carboxyltransferase to acetyl-CoA to form malonyl-CoA. The sequence is that of Acetyl-coenzyme A carboxylase carboxyl transferase subunit alpha from Wigglesworthia glossinidia brevipalpis.